The primary structure comprises 54 residues: MAVQKNKPTRSKRGMRRSHDYLKIPLLSKDKLSGEIHIRHHITKNGYYKGKKVI.

The protein belongs to the bacterial ribosomal protein bL32 family.

This is Large ribosomal subunit protein bL32 from Buchnera aphidicola subsp. Baizongia pistaciae (strain Bp).